Consider the following 775-residue polypeptide: Lon protease (775 aa).

The Lon N-terminal domain maps to 6-207 (LPLMALRDIV…TIINILTSNI (202 aa)). 356–363 (GPPGVGKT) lines the ATP pocket. The Lon proteolytic domain maps to 592–773 (NDQIGSTTGL…DQVLEHALTK (182 aa)). Catalysis depends on residues serine 679 and lysine 722.

Belongs to the peptidase S16 family. Homohexamer. Organized in a ring with a central cavity.

The protein localises to the cytoplasm. The enzyme catalyses Hydrolysis of proteins in presence of ATP.. In terms of biological role, ATP-dependent serine protease that mediates the selective degradation of mutant and abnormal proteins as well as certain short-lived regulatory proteins. Required for cellular homeostasis and for survival from DNA damage and developmental changes induced by stress. Degrades polypeptides processively to yield small peptide fragments that are 5 to 10 amino acids long. Binds to DNA in a double-stranded, site-specific manner. The sequence is that of Lon protease from Rickettsia bellii (strain RML369-C).